Reading from the N-terminus, the 149-residue chain is VapC ribonuclease PF0355 (149 aa).

The PINc domain maps to threonine 8–proline 122. 2 residues coordinate Mg(2+): aspartate 10 and aspartate 98.

The protein belongs to the PINc/VapC protein family. Mg(2+) is required as a cofactor.

Its function is as follows. Toxic component of a type II toxin-antitoxin (TA) system. An RNase. In Pyrococcus furiosus (strain ATCC 43587 / DSM 3638 / JCM 8422 / Vc1), this protein is VapC ribonuclease PF0355.